The chain runs to 266 residues: Probable matrix protein (266 aa).

Residues 158–177 (ACSAGTGGTEEGDSDTEEEP) form a disordered region. Residues 167–177 (EEGDSDTEEEP) show a composition bias toward acidic residues.

The protein resides in the virion. Functionally, may play a role in virion budding and release by binding the ribonucleocapsid and the host membrane. This chain is Probable matrix protein, found in Ixodidae (hardbacked ticks).